A 133-amino-acid polypeptide reads, in one-letter code: Small ribosomal subunit protein uS19 (133 aa).

The protein belongs to the universal ribosomal protein uS19 family.

Its function is as follows. Protein S19 forms a complex with S13 that binds strongly to the 16S ribosomal RNA. This is Small ribosomal subunit protein uS19 (rps19) from Archaeoglobus fulgidus (strain ATCC 49558 / DSM 4304 / JCM 9628 / NBRC 100126 / VC-16).